Here is a 265-residue protein sequence, read N- to C-terminus: Undecaprenyl-diphosphatase 1 (265 aa).

7 helical membrane-spanning segments follow: residues 4-24 (IITAFILGIVEGLAEFLPISS), 42-62 (AKTFEIVIQLGAILAIAILYH), 84-104 (FHVFLGVFPAVVAGLLLHDVI), 108-128 (LFQPYTVVIGLVAGAILMIFA), 184-204 (SEFSFLIALPVMVGATGLDLL), 217-237 (MFAVGFITSFIVAMLAVVTFL), and 245-265 (LKPFAYYRILLAILFTVFVLL).

It belongs to the UppP family.

It is found in the cell membrane. It catalyses the reaction di-trans,octa-cis-undecaprenyl diphosphate + H2O = di-trans,octa-cis-undecaprenyl phosphate + phosphate + H(+). In terms of biological role, catalyzes the dephosphorylation of undecaprenyl diphosphate (UPP). Confers resistance to bacitracin. This Bacillus anthracis protein is Undecaprenyl-diphosphatase 1.